A 1158-amino-acid chain; its full sequence is MKIRVELINGNEHRTSSTPQQPQQNPSVSHIFDGETAVKDHIKVLLTHFKIPVDKVSSYALQNPFTLAYVEDSFLTPERLVEAEKSYFILRMKPHAIADRVVDQLTKIEPTSPHIKDTIFNIRYQMKDVEYVEEFIIKGGINQLLAVIIKSRGNTQSYALTALRCFMGYNSGLEEVMSRPQLIDKLYSLVCSVGVLPSVCRQAIELLFCVCNFDGFQLVHRSAKNHAQETSTPAYSNLITLLSSGDMETQLNTLTLFNCLLDNAPNPRKSEKLLSRWQQLGIIKILKSQEHVTHSDFRTQIARFQANSGFGIDGSGRKRTLTRQLSTQELEFQLHQFREQQPLISLLTSELKFLRNAIKSAIENGSYINYRAPTERYDEYSQRKLEMIGDSPTNLQFLKRNDKFTNAFRKSMYVRSPNTSDLFDSSTLEDTYDGNNDTNSCTSISTSSTPIHISQPTTLIVPSTTPNHPPQQSQQTPPLQLQKEKEKEKEKEKEKEKEKEKEQQQQQQQSNKQSTPKPNLSCLLSPITISNTLNNNNNNNNNTNNNIIKSNNNNNNNNCTIKDLSPIVKSEKSNEDEIHEISLNGASSNHEEPIKYKLQPTKSPITPSKRMKPLHWTRILNSQFEGKKTIWNSYLPEVTFEEELFVDLFSLYTERIVSFSGSPVGSGTSISGGGPIKSKPIQKVISVLSQKRSNAIIVMCGKLPSDDILIRAIRNLDSNKLSLDGVSSIISNFPTSEELASIHELHSNEVILDKPERWCLMIDGFPMIKHRLRCWEFMLKIEDSLKSIIESIDTVLLACKELRTSITINCLFSLLLQLGNYLNGGHLYRGQSDGFNLESLSKMIEIKDNSNSGSLLDFAIKTLYQQSPMKGNSNTSIHLELAHVPNASLINFTDVGTSVSKLLQDYSEIVLMSDEIQQTTDKDDPFLDIVPKFMGTILLILKNLQTKFLETEKYLFETIDYFNPTNQTLQQYQQQQYQQYQQQQFQQNIINNNNNNNNNNSNNNNNNISGNTTTTTTTTTTTTTGSIINNNNNNNNNNNNSNNNIINNNNSQSNLQSLLHPQYYLSNSSSSSSSSYKITPPLSSSLSITSQEWNQQKFTCEKFFTLFSTITTAFKKSPSKRLSQKGFGLKISNSDDPMAVIIEALKTGSPNDMVKRAF.

3 disordered regions span residues 8–29, 417–523, and 990–1052; these read INGN…PSVS, PNTS…LSCL, and INNN…NNSQ. One can recognise a GBD/FH3 domain in the interval 20 to 388; it reads QQPQQNPSVS…EYSQRKLEMI (369 aa). A compositionally biased stretch (polar residues) spans 417 to 437; it reads PNTSDLFDSSTLEDTYDGNND. Over residues 438 to 481 the composition is skewed to low complexity; sequence TNSCTSISTSSTPIHISQPTTLIVPSTTPNHPPQQSQQTPPLQL. The stretch at 479–515 forms a coiled coil; the sequence is LQLQKEKEKEKEKEKEKEKEKEKEQQQQQQQSNKQST. Residues 482–503 show a composition bias toward basic and acidic residues; that stretch reads QKEKEKEKEKEKEKEKEKEKEQ. Residues 601 to 998 enclose the FH2 domain; sequence TKSPITPSKR…IINNNNNNNN (398 aa). Residues 1134-1158 enclose the DAD domain; sequence SDDPMAVIIEALKTGSPNDMVKRAF.

This sequence belongs to the formin homology family. Diaphanous subfamily. In terms of assembly, interacts (via GBD/FH3 domain) with activated Rho-GTPases.

Its subcellular location is the cytoplasm. The protein localises to the cytosol. It is found in the cytoskeleton. In terms of biological role, formins play an important role in the nucleation of actin and the formation of linear actin filaments. The polypeptide is Formin-C (forC) (Dictyostelium discoideum (Social amoeba)).